The primary structure comprises 521 residues: Na(+)/H(+) antiporter ApNhaP (521 aa).

Topologically, residues 1–18 (MTIEAAMGEEAIKENLEQ) are periplasmic. Residues 19–39 (FLIVLSVSLGVATLSQISSFF) form a helical membrane-spanning segment. The Cytoplasmic portion of the chain corresponds to 40–41 (RQ). Residues 42-62 (IPYTLLLVIVGLGLAFVDIRL) form a helical membrane-spanning segment. Residues 63-94 (VNLSPELILEIFLPPLLFEAAWNIRWRNLKKN) are Periplasmic-facing. The chain crosses the membrane as a helical span at residues 95 to 115 (LFPVVLLAIIGVVISVVGIGF). The Cytoplasmic portion of the chain corresponds to 116–126 (SLNYFSGLSLP). A helical transmembrane segment spans residues 127-147 (IALLVGAILAATDPVSVIALF). Residues 148–164 (RELGVGERLTVLMEGES) lie on the Periplasmic side of the membrane. The helical transmembrane segment at 165 to 185 (LFNDGVAVVAFSLLVGIPLGT) threads the bilayer. At 186 to 194 (QEFSVTNTL) the chain is on the cytoplasmic side. A helical transmembrane segment spans residues 195–215 (IQFVTLQGIGIGCGGVIGFGI). The Periplasmic segment spans residues 216–245 (SYLTQRFDLPLVEQSLTLVSAYGTYLITEE). A helical transmembrane segment spans residues 246–266 (LGGSGVIGVVTVGLILGNFGS). Residues 267–276 (RIGMNPRTRL) lie on the Cytoplasmic side of the membrane. A helical transmembrane segment spans residues 277–297 (LVSEFWEFIAFFVNSIVFLLI). Residues 298 to 311 (GDQINIRGLADNGQ) are Periplasmic-facing. A helical transmembrane segment spans residues 312–332 (LILITIIALVIIRAISIYGLG). Over 333 to 349 (TISNLITKQDISWQEET) the chain is Cytoplasmic. Residues 350–370 (VLWWGGLRGSVSIALALSVPV) traverse the membrane as a helical segment. Over 371 to 380 (MLDGRQDIIE) the chain is Periplasmic. Residues 381 to 401 (AVFGVVLFTLLVQGLTMQTVI) form a helical membrane-spanning segment. The Cytoplasmic portion of the chain corresponds to 402 to 521 (EKLGLIGDRA…LLQEVLAKPE (120 aa)).

It belongs to the monovalent cation:proton antiporter 1 (CPA1) transporter (TC 2.A.36) family.

It localises to the cell inner membrane. Functionally, na(+)/H(+) antiporter that extrudes sodium in exchange for external protons. Also shows high Ca(2+)/H(+) antiporter activity at alkaline pH. Does not catalyze exchange between Li(+) and H(+). The polypeptide is Na(+)/H(+) antiporter ApNhaP (apnhaP) (Aphanothece halophytica).